The primary structure comprises 179 residues: Large ribosomal subunit protein uL6 (179 aa).

The protein belongs to the universal ribosomal protein uL6 family. In terms of assembly, part of the 50S ribosomal subunit.

In terms of biological role, this protein binds to the 23S rRNA, and is important in its secondary structure. It is located near the subunit interface in the base of the L7/L12 stalk, and near the tRNA binding site of the peptidyltransferase center. The sequence is that of Large ribosomal subunit protein uL6 from Bacillus anthracis.